Consider the following 168-residue polypeptide: Inorganic pyrophosphatase (168 aa).

Residues lysine 23, arginine 37, and tyrosine 49 each coordinate substrate. Mg(2+)-binding residues include aspartate 59, aspartate 64, and aspartate 96. Position 133 (tyrosine 133) interacts with substrate.

It belongs to the PPase family. In terms of assembly, homohexamer. Mg(2+) is required as a cofactor.

It is found in the cytoplasm. The enzyme catalyses diphosphate + H2O = 2 phosphate + H(+). Its function is as follows. Catalyzes the hydrolysis of inorganic pyrophosphate (PPi) forming two phosphate ions. This Methanosarcina acetivorans (strain ATCC 35395 / DSM 2834 / JCM 12185 / C2A) protein is Inorganic pyrophosphatase.